The primary structure comprises 97 residues: Large ribosomal subunit protein eL21 (97 aa).

The protein belongs to the eukaryotic ribosomal protein eL21 family.

This chain is Large ribosomal subunit protein eL21 (rpl21e), found in Archaeoglobus fulgidus (strain ATCC 49558 / DSM 4304 / JCM 9628 / NBRC 100126 / VC-16).